We begin with the raw amino-acid sequence, 205 residues long: LexA repressor (205 aa).

Positions 28–48 (RAEIAASLGFRSPNAAEEHLK) form a DNA-binding region, H-T-H motif. Active-site for autocatalytic cleavage activity residues include S122 and K159.

This sequence belongs to the peptidase S24 family. As to quaternary structure, homodimer.

It carries out the reaction Hydrolysis of Ala-|-Gly bond in repressor LexA.. Its function is as follows. Represses a number of genes involved in the response to DNA damage (SOS response), including recA and lexA. Binds to the 16 bp palindromic sequence 5'-CTGTATATATATACAG-3'. In the presence of single-stranded DNA, RecA interacts with LexA causing an autocatalytic cleavage which disrupts the DNA-binding part of LexA, leading to derepression of the SOS regulon and eventually DNA repair. In Providencia rettgeri, this protein is LexA repressor.